Consider the following 268-residue polypeptide: Hydroxyethylthiazole kinase (268 aa).

Met-45 is a binding site for substrate. Positions 121 and 167 each coordinate ATP. Gly-194 serves as a coordination point for substrate.

Belongs to the Thz kinase family. It depends on Mg(2+) as a cofactor.

It catalyses the reaction 5-(2-hydroxyethyl)-4-methylthiazole + ATP = 4-methyl-5-(2-phosphooxyethyl)-thiazole + ADP + H(+). Its pathway is cofactor biosynthesis; thiamine diphosphate biosynthesis; 4-methyl-5-(2-phosphoethyl)-thiazole from 5-(2-hydroxyethyl)-4-methylthiazole: step 1/1. Catalyzes the phosphorylation of the hydroxyl group of 4-methyl-5-beta-hydroxyethylthiazole (THZ). The protein is Hydroxyethylthiazole kinase of Bacillus thuringiensis subsp. konkukian (strain 97-27).